Consider the following 323-residue polypeptide: Putative CRISPR-associated protein SSO1401 (323 aa).

As to quaternary structure, sometimes seen associated with the aCascade ribonucleoprotein complex, minimally composed of Csa2 and Cas5a, which binds crRNA. Other probable components of aCascade in strain P1 are Cas6 and Csa5, while SSO1399, Cas5b (SSO1400) and SSO1401 have sometimes been seen weakly associated. The Csa2-Cas5a-crRNA complex also binds target DNA homologous to crRNA, probably forming an R-loop. Purified aCascade forms a filament about 6 nm in width.

CRISPR (clustered regularly interspaced short palindromic repeat) is an adaptive immune system that provides protection against mobile genetic elements (viruses, transposable elements and conjugative plasmids). CRISPR clusters contain spacers, sequences complementary to antecedent mobile elements, and target invading nucleic acids. CRISPR clusters are transcribed and processed into CRISPR RNA (crRNA). The chain is Putative CRISPR-associated protein SSO1401 from Saccharolobus solfataricus (strain ATCC 35092 / DSM 1617 / JCM 11322 / P2) (Sulfolobus solfataricus).